The following is a 96-amino-acid chain: Large ribosomal subunit protein eL14 (96 aa).

The protein belongs to the eukaryotic ribosomal protein eL14 family.

In Desulfurococcus amylolyticus (strain DSM 18924 / JCM 16383 / VKM B-2413 / 1221n) (Desulfurococcus kamchatkensis), this protein is Large ribosomal subunit protein eL14.